The primary structure comprises 123 residues: Large ribosomal subunit protein uL29 (123 aa).

At lysine 19 the chain carries N6-acetyllysine. Residue lysine 25 forms a Glycyl lysine isopeptide (Lys-Gly) (interchain with G-Cter in SUMO2) linkage. Residue serine 29 is modified to Phosphoserine. Residue lysine 43 is modified to N6-acetyllysine. Residues 95–114 (LNKHEENLKTKKQQRKERLY) are disordered.

Belongs to the universal ribosomal protein uL29 family. As to quaternary structure, component of the large ribosomal subunit.

It localises to the cytoplasm. In terms of biological role, component of the large ribosomal subunit. The ribosome is a large ribonucleoprotein complex responsible for the synthesis of proteins in the cell. This chain is Large ribosomal subunit protein uL29 (RPL35), found in Bos taurus (Bovine).